The chain runs to 1322 residues: Phosphoribosylformylglycinamidine synthase (1322 aa).

ATP-binding positions include 300-311 (GASTGAGGEIRD) and alanine 702. Positions 703, 742, 746, and 915 each coordinate Mg(2+). An ATP-binding site is contributed by serine 917. A Glutamine amidotransferase type-1 domain is found at 1073-1322 (VAILREQGIN…LFRNARAWVG (250 aa)). Residue cysteine 1166 is the Nucleophile of the active site. Residues histidine 1287 and glutamate 1289 contribute to the active site.

This sequence in the N-terminal section; belongs to the FGAMS family. In terms of assembly, monomer.

The protein localises to the cytoplasm. The catalysed reaction is N(2)-formyl-N(1)-(5-phospho-beta-D-ribosyl)glycinamide + L-glutamine + ATP + H2O = 2-formamido-N(1)-(5-O-phospho-beta-D-ribosyl)acetamidine + L-glutamate + ADP + phosphate + H(+). It functions in the pathway purine metabolism; IMP biosynthesis via de novo pathway; 5-amino-1-(5-phospho-D-ribosyl)imidazole from N(2)-formyl-N(1)-(5-phospho-D-ribosyl)glycinamide: step 1/2. Phosphoribosylformylglycinamidine synthase involved in the purines biosynthetic pathway. Catalyzes the ATP-dependent conversion of formylglycinamide ribonucleotide (FGAR) and glutamine to yield formylglycinamidine ribonucleotide (FGAM) and glutamate. This chain is Phosphoribosylformylglycinamidine synthase, found in Xylella fastidiosa (strain Temecula1 / ATCC 700964).